We begin with the raw amino-acid sequence, 526 residues long: Butyrophilin subfamily 1 member A1 (526 aa).

Positions 1-26 (MAVFPNSCLAGCLLIFILLQLPKLDS) are cleaved as a signal peptide. 2 Ig-like V-type domains span residues 27 to 140 (APFD…VHLK) and 148 to 234 (PHIS…VEVS). At 27 to 242 (APFDVIGPQE…VSIPASFFPR (216 aa)) the chain is on the extracellular side. Disulfide bonds link Cys-50/Cys-124 and Cys-164/Cys-218. Asn-55 is a glycosylation site (N-linked (GlcNAc...) (complex) asparagine). N-linked (GlcNAc...) (hybrid) asparagine glycosylation occurs at Asn-215. Residues 243 to 269 (LTPWMVAVAVILVVLGLLTIGSIFFTW) traverse the membrane as a helical segment. Topologically, residues 270–526 (RLYKERSRQR…IPLQPSQGVP (257 aa)) are cytoplasmic. The B30.2/SPRY domain maps to 285-479 (SKEKLLEELK…LTICPVTDGL (195 aa)).

This sequence belongs to the immunoglobulin superfamily. BTN/MOG family. Seems to associate with xanthine dehydrogenase/oxidase. As to expression, expressed in mammary tissue.

It is found in the membrane. Its function is as follows. May function in the secretion of milk-fat droplets. May act as a specific membrane-associated receptor for the association of cytoplasmic droplets with the apical plasma membrane. Inhibits the proliferation of CD4 and CD8 T-cells activated by anti-CD3 antibodies, T-cell metabolism and IL2 and IFNG secretion. The sequence is that of Butyrophilin subfamily 1 member A1 (BTN1A1) from Bos taurus (Bovine).